Here is a 248-residue protein sequence, read N- to C-terminus: Cytochrome c oxidase subunit 2 (248 aa).

The N-terminal stretch at 1-12 (MLLMNLFTIINN) is a signal peptide. Residues 13–39 (DVPTPYNMYFQDSTTPHQEGILELHDN) are Mitochondrial intermembrane-facing. A helical membrane pass occupies residues 40–61 (IMFYMLTVLGLVSWMMIIIIKD). Residues 62–79 (YKNNPITYKYIKHGQMIE) are Mitochondrial matrix-facing. The chain crosses the membrane as a helical span at residues 80 to 104 (IIWTILPAIILLMIAFPSFILLYLC). At 105-248 (DEVISPAMTI…PTFLTWLNEQ (144 aa)) the chain is on the mitochondrial intermembrane side. Cu cation contacts are provided by His183, Cys218, Glu220, Cys222, His226, and Met229. Glu220 is a Mg(2+) binding site.

Belongs to the cytochrome c oxidase subunit 2 family. In terms of assembly, component of the cytochrome c oxidase (complex IV, CIV), a multisubunit enzyme composed of a catalytic core of 3 subunits and several supernumerary subunits. The complex exists as a monomer or a dimer and forms supercomplexes (SCs) in the inner mitochondrial membrane with ubiquinol-cytochrome c oxidoreductase (cytochrome b-c1 complex, complex III, CIII). Requires Cu cation as cofactor. The signal sequence of COX2 is processed by IMP1.

The protein resides in the mitochondrion inner membrane. The enzyme catalyses 4 Fe(II)-[cytochrome c] + O2 + 8 H(+)(in) = 4 Fe(III)-[cytochrome c] + 2 H2O + 4 H(+)(out). In terms of biological role, component of the cytochrome c oxidase, the last enzyme in the mitochondrial electron transport chain which drives oxidative phosphorylation. The respiratory chain contains 3 multisubunit complexes succinate dehydrogenase (complex II, CII), ubiquinol-cytochrome c oxidoreductase (cytochrome b-c1 complex, complex III, CIII) and cytochrome c oxidase (complex IV, CIV), that cooperate to transfer electrons derived from NADH and succinate to molecular oxygen, creating an electrochemical gradient over the inner membrane that drives transmembrane transport and the ATP synthase. Cytochrome c oxidase is the component of the respiratory chain that catalyzes the reduction of oxygen to water. Electrons originating from reduced cytochrome c in the intermembrane space (IMS) are transferred via the dinuclear copper A center (CU(A)) of subunit 2 and heme A of subunit 1 to the active site in subunit 1, a binuclear center (BNC) formed by heme A3 and copper B (CU(B)). The BNC reduces molecular oxygen to 2 water molecules using 4 electrons from cytochrome c in the IMS and 4 protons from the mitochondrial matrix. This is Cytochrome c oxidase subunit 2 (COX2) from Eremothecium gossypii (strain ATCC 10895 / CBS 109.51 / FGSC 9923 / NRRL Y-1056) (Yeast).